The following is a 565-amino-acid chain: Glucose starvation modulator protein 1 (565 aa).

Positions 20 to 48 form a DNA-binding region, zn(2)-C6 fungal-type; that stretch reads CVFCHQKHLQCSNERPCKNCVKRNIAHGC. Disordered regions lie at residues 63–106 and 250–269; these read GVSG…ESSN and QVSPSPSNTSTSENNTNTLS. Over residues 82 to 93 the composition is skewed to polar residues; sequence SPLSTSMSPTDS. Low complexity predominate over residues 252–269; it reads SPSPSNTSTSENNTNTLS.

Belongs to the ERT1/acuK family.

It is found in the nucleus. Transcription factor which regulates nonfermentable carbon utilization. This Candida dubliniensis (strain CD36 / ATCC MYA-646 / CBS 7987 / NCPF 3949 / NRRL Y-17841) (Yeast) protein is Glucose starvation modulator protein 1 (GSM1).